The sequence spans 273 residues: Ribosomal RNA small subunit methyltransferase A (273 aa).

Positions 18, 20, 45, 66, 91, and 113 each coordinate S-adenosyl-L-methionine.

It belongs to the class I-like SAM-binding methyltransferase superfamily. rRNA adenine N(6)-methyltransferase family. RsmA subfamily.

The protein localises to the cytoplasm. It carries out the reaction adenosine(1518)/adenosine(1519) in 16S rRNA + 4 S-adenosyl-L-methionine = N(6)-dimethyladenosine(1518)/N(6)-dimethyladenosine(1519) in 16S rRNA + 4 S-adenosyl-L-homocysteine + 4 H(+). In terms of biological role, specifically dimethylates two adjacent adenosines (A1518 and A1519) in the loop of a conserved hairpin near the 3'-end of 16S rRNA in the 30S particle. May play a critical role in biogenesis of 30S subunits. The polypeptide is Ribosomal RNA small subunit methyltransferase A (Salmonella typhimurium (strain LT2 / SGSC1412 / ATCC 700720)).